Consider the following 546-residue polypeptide: uncharacterized protein (546 aa).

5 consecutive transmembrane segments (helical) span residues 4 to 23, 30 to 47, 57 to 79, 91 to 113, and 155 to 177; these read ILLE…GYPL, GSSL…AMGS, IVYV…PAFV, ALII…LLGF, and PVVG…ISLV. 2 RCK C-terminal domains span residues 189 to 274 and 275 to 359; these read GKRL…FLGE and VSEE…FFGD. The next 6 membrane-spanning stretches (helical) occupy residues 372-394, 399-421, 434-456, 460-482, 489-511, and 521-543; these read FSLG…GGIT, FAGG…SMVW, IGLV…TTLA, GLAI…LWIG, PMSI…GYAL, and IGYA…ILLT.

The protein belongs to the AAE transporter (TC 2.A.81) family.

Its subcellular location is the cell membrane. This is an uncharacterized protein from Geobacter sulfurreducens (strain ATCC 51573 / DSM 12127 / PCA).